Here is a 321-residue protein sequence, read N- to C-terminus: Beta-ketoacyl-[acyl-carrier-protein] synthase III (321 aa).

Catalysis depends on residues Cys-114 and His-248. Residues 249 to 253 (QANKR) are ACP-binding. The active site involves Asn-278.

The protein belongs to the thiolase-like superfamily. FabH family. Homodimer.

The protein resides in the cytoplasm. It catalyses the reaction malonyl-[ACP] + acetyl-CoA + H(+) = 3-oxobutanoyl-[ACP] + CO2 + CoA. Its pathway is lipid metabolism; fatty acid biosynthesis. In terms of biological role, catalyzes the condensation reaction of fatty acid synthesis by the addition to an acyl acceptor of two carbons from malonyl-ACP. Catalyzes the first condensation reaction which initiates fatty acid synthesis and may therefore play a role in governing the total rate of fatty acid production. Possesses both acetoacetyl-ACP synthase and acetyl transacylase activities. Its substrate specificity determines the biosynthesis of branched-chain and/or straight-chain of fatty acids. The protein is Beta-ketoacyl-[acyl-carrier-protein] synthase III of Sphingopyxis alaskensis (strain DSM 13593 / LMG 18877 / RB2256) (Sphingomonas alaskensis).